The sequence spans 473 residues: tRNA-2-methylthio-N(6)-dimethylallyladenosine synthase (473 aa).

The MTTase N-terminal domain occupies 5-125 (RKLHIKSYGC…LPQLLARAKA (121 aa)). Residues Cys14, Cys50, Cys88, Cys166, Cys170, and Cys173 each coordinate [4Fe-4S] cluster. The Radical SAM core domain occupies 152–384 (RARGISAFVT…QNLIDSQQSA (233 aa)). The TRAM domain maps to 387 to 449 (RAAVGTTVDV…RYSLLGSLAS (63 aa)). The span at 453 to 462 (SRASADDAPP) shows a compositional bias: low complexity. A disordered region spans residues 453 to 473 (SRASADDAPPVGASSPAIMGV).

The protein belongs to the methylthiotransferase family. MiaB subfamily. As to quaternary structure, monomer. [4Fe-4S] cluster serves as cofactor.

It is found in the cytoplasm. It carries out the reaction N(6)-dimethylallyladenosine(37) in tRNA + (sulfur carrier)-SH + AH2 + 2 S-adenosyl-L-methionine = 2-methylsulfanyl-N(6)-dimethylallyladenosine(37) in tRNA + (sulfur carrier)-H + 5'-deoxyadenosine + L-methionine + A + S-adenosyl-L-homocysteine + 2 H(+). In terms of biological role, catalyzes the methylthiolation of N6-(dimethylallyl)adenosine (i(6)A), leading to the formation of 2-methylthio-N6-(dimethylallyl)adenosine (ms(2)i(6)A) at position 37 in tRNAs that read codons beginning with uridine. The protein is tRNA-2-methylthio-N(6)-dimethylallyladenosine synthase of Nitrobacter hamburgensis (strain DSM 10229 / NCIMB 13809 / X14).